A 293-amino-acid chain; its full sequence is N-acetylneuraminate lyase (293 aa).

2 residues coordinate aceneuramate: Ser-48 and Ser-49. Catalysis depends on Tyr-137, which acts as the Proton donor. Lys-165 functions as the Schiff-base intermediate with substrate in the catalytic mechanism. 5 residues coordinate aceneuramate: Thr-167, Gly-189, Asp-191, Glu-192, and Ser-208.

Belongs to the DapA family. NanA subfamily. In terms of assembly, homotetramer.

Its subcellular location is the cytoplasm. It catalyses the reaction aceneuramate = aldehydo-N-acetyl-D-mannosamine + pyruvate. The protein operates within amino-sugar metabolism; N-acetylneuraminate degradation; D-fructose 6-phosphate from N-acetylneuraminate: step 1/5. In terms of biological role, catalyzes the reversible aldol cleavage of N-acetylneuraminic acid (sialic acid; Neu5Ac) to form pyruvate and N-acetylmannosamine (ManNAc) via a Schiff base intermediate. The protein is N-acetylneuraminate lyase of Staphylococcus aureus (strain bovine RF122 / ET3-1).